A 105-amino-acid polypeptide reads, in one-letter code: Large ribosomal subunit protein uL24 (105 aa).

This sequence belongs to the universal ribosomal protein uL24 family. As to quaternary structure, part of the 50S ribosomal subunit.

In terms of biological role, one of two assembly initiator proteins, it binds directly to the 5'-end of the 23S rRNA, where it nucleates assembly of the 50S subunit. Its function is as follows. One of the proteins that surrounds the polypeptide exit tunnel on the outside of the subunit. This chain is Large ribosomal subunit protein uL24, found in Pseudothermotoga lettingae (strain ATCC BAA-301 / DSM 14385 / NBRC 107922 / TMO) (Thermotoga lettingae).